The primary structure comprises 141 residues: Hemoglobin subunit alpha (141 aa).

A Globin domain is found at 1–141 (VLSASDKTNL…VSTVLTSKYR (141 aa)). Position 3 is a phosphoserine (serine 3). Position 7 is an N6-succinyllysine (lysine 7). Residue threonine 8 is modified to Phosphothreonine. Lysine 11 carries the N6-succinyllysine modification. Lysine 16 carries the N6-acetyllysine; alternate modification. An N6-succinyllysine; alternate modification is found at lysine 16. Tyrosine 24 is modified (phosphotyrosine). Serine 35 is subject to Phosphoserine. N6-succinyllysine is present on lysine 40. Position 49 is a phosphoserine (serine 49). Histidine 58 lines the O2 pocket. Histidine 87 lines the heme b pocket. A Phosphoserine modification is found at serine 102. Threonine 108 is subject to Phosphothreonine. Serine 124 is subject to Phosphoserine. Threonine 134 and threonine 137 each carry phosphothreonine. Phosphoserine is present on serine 138.

Belongs to the globin family. In terms of assembly, heterotetramer of two alpha chains and two beta chains. Red blood cells.

Its function is as follows. Involved in oxygen transport from the lung to the various peripheral tissues. This chain is Hemoglobin subunit alpha, found in Blarina brevicauda (Northern short-tailed shrew).